A 432-amino-acid polypeptide reads, in one-letter code: 5'-deoxyadenosine deaminase (432 aa).

Zn(2+)-binding residues include H63 and H65. E92 and H184 together coordinate substrate. Position 211 (H211) interacts with Zn(2+). The substrate site is built by E214 and D299. D299 is a Zn(2+) binding site.

This sequence belongs to the metallo-dependent hydrolases superfamily. MTA/SAH deaminase family. In terms of assembly, homotetramer. Zn(2+) is required as a cofactor.

The catalysed reaction is 5'-deoxyadenosine + H2O + H(+) = 5'-deoxyinosine + NH4(+). It carries out the reaction S-adenosyl-L-homocysteine + H2O + H(+) = S-inosyl-L-homocysteine + NH4(+). The enzyme catalyses S-methyl-5'-thioadenosine + H2O + H(+) = S-methyl-5'-thioinosine + NH4(+). It catalyses the reaction adenosine + H2O + H(+) = inosine + NH4(+). It participates in amino-acid biosynthesis; S-adenosyl-L-methionine biosynthesis. Functionally, catalyzes the deamination of three SAM-derived enzymatic products, namely 5'-deoxyadenosine, S-adenosyl-L-homocysteine, and 5'-methylthioadenosine, to produce the inosine analogs. Can also deaminate adenosine. The preferred substrate for this enzyme is 5'-deoxyadenosine, but all these substrates are efficiently deaminated. Likely functions in a S-adenosyl-L-methionine (SAM) recycling pathway from S-adenosyl-L-homocysteine (SAH) produced from SAM-dependent methylation reactions. May also be involved in the recycling of 5'-deoxyadenosine, whereupon the 5'-deoxyribose moiety of 5'-deoxyinosine is further metabolized to deoxyhexoses used for the biosynthesis of aromatic amino acids in methanogens. This Methanosarcina acetivorans (strain ATCC 35395 / DSM 2834 / JCM 12185 / C2A) protein is 5'-deoxyadenosine deaminase.